The chain runs to 729 residues: ATP-dependent RNA helicase DHX15 homolog (729 aa).

The segment at 1 to 25 (MSKRRIEVGETYGSKAKKDPEASSS) is disordered. The 165-residue stretch at 82–246 (MRLLSLHQCI…FDNAPLMKVP (165 aa)) folds into the Helicase ATP-binding domain. An ATP-binding site is contributed by 95 to 102 (GETGSGKT). The DEAH box signature appears at 193–196 (DEAH). Residues 271–451 (TVIQIHMCEE…TVVLQLKKLG (181 aa)) enclose the Helicase C-terminal domain.

The protein belongs to the DEAD box helicase family. DEAH subfamily. DDX15/PRP43 sub-subfamily.

It carries out the reaction ATP + H2O = ADP + phosphate + H(+). In terms of biological role, RNA helicase involved in mRNA processing and antiviral innate immunity. Acts as an activator of the p38 MAPK cascade. The chain is ATP-dependent RNA helicase DHX15 homolog from Drosophila melanogaster (Fruit fly).